Reading from the N-terminus, the 212-residue chain is 2-C-methyl-D-erythritol 4-phosphate cytidylyltransferase (212 aa).

Belongs to the IspD/TarI cytidylyltransferase family. IspD subfamily.

It catalyses the reaction 2-C-methyl-D-erythritol 4-phosphate + CTP + H(+) = 4-CDP-2-C-methyl-D-erythritol + diphosphate. It participates in isoprenoid biosynthesis; isopentenyl diphosphate biosynthesis via DXP pathway; isopentenyl diphosphate from 1-deoxy-D-xylulose 5-phosphate: step 2/6. Catalyzes the formation of 4-diphosphocytidyl-2-C-methyl-D-erythritol from CTP and 2-C-methyl-D-erythritol 4-phosphate (MEP). This Chlamydia felis (strain Fe/C-56) (Chlamydophila felis) protein is 2-C-methyl-D-erythritol 4-phosphate cytidylyltransferase.